The primary structure comprises 477 residues: MKILKSFTPRILVIGDLMIDHYLWGNCERISPEAPVQIVDISKETTVLGGGGNVVNNLVALGAKVSVSGVIGNDENGVELLKLLREIDVNVDNIVIQEGRKTSKKSRVIAASQQILRYDKESKEEISKSSIEVILNSLAKDISRYDAVVLSDYSKGVLTKELCQGVISTCSKNGIKVLVDPKGSDYSKYSGAYLLTPNKKEAIQATKIDIKDKQSLKEALLKMKKDANLAISLITLSEDGVAIYDDEMKIFPTVAKEVFDVTGAGDTVIASIAFAISAGKSIEESAKFANLAAGVVVGKIGSATVSISEIEEYEASLHKSTSDAHIKGFEEIEAIVKRYKESGKKVVFTNGCFDILHVGHVKYLQIAKSFGDVLIVGLNSDTSVTRLKGPSRPVNIAEDRAYLLAALEAVDFVVPFEDDTPYELIKMIKPDTLVKGGDYEGKSVIGTEFAQELKLVDFVDGKSTTKTIQKIKGDLHV.

Residues 1-321 (MKILKSFTPR…EYEASLHKST (321 aa)) form a ribokinase region. An ATP-binding site is contributed by 198–201 (NKKE). Residue Asp-266 is part of the active site. A cytidylyltransferase region spans residues 348 to 477 (FTNGCFDILH…IQKIKGDLHV (130 aa)).

The protein in the N-terminal section; belongs to the carbohydrate kinase PfkB family. This sequence in the C-terminal section; belongs to the cytidylyltransferase family. Homodimer.

The enzyme catalyses D-glycero-beta-D-manno-heptose 7-phosphate + ATP = D-glycero-beta-D-manno-heptose 1,7-bisphosphate + ADP + H(+). The catalysed reaction is D-glycero-beta-D-manno-heptose 1-phosphate + ATP + H(+) = ADP-D-glycero-beta-D-manno-heptose + diphosphate. The protein operates within nucleotide-sugar biosynthesis; ADP-L-glycero-beta-D-manno-heptose biosynthesis; ADP-L-glycero-beta-D-manno-heptose from D-glycero-beta-D-manno-heptose 7-phosphate: step 1/4. It participates in nucleotide-sugar biosynthesis; ADP-L-glycero-beta-D-manno-heptose biosynthesis; ADP-L-glycero-beta-D-manno-heptose from D-glycero-beta-D-manno-heptose 7-phosphate: step 3/4. Catalyzes the phosphorylation of D-glycero-D-manno-heptose 7-phosphate at the C-1 position to selectively form D-glycero-beta-D-manno-heptose-1,7-bisphosphate. Functionally, catalyzes the ADP transfer from ATP to D-glycero-beta-D-manno-heptose 1-phosphate, yielding ADP-D-glycero-beta-D-manno-heptose. The sequence is that of Bifunctional protein HldE from Sulfurimonas denitrificans (strain ATCC 33889 / DSM 1251) (Thiomicrospira denitrificans (strain ATCC 33889 / DSM 1251)).